Reading from the N-terminus, the 55-residue chain is Large ribosomal subunit protein bL33 (55 aa).

The protein belongs to the bacterial ribosomal protein bL33 family.

The protein is Large ribosomal subunit protein bL33 of Ruegeria pomeroyi (strain ATCC 700808 / DSM 15171 / DSS-3) (Silicibacter pomeroyi).